Consider the following 316-residue polypeptide: Malate dehydrogenase 2 (316 aa).

NAD(+)-binding positions include 10–15 (GGGQIG) and aspartate 34. The substrate site is built by arginine 83 and arginine 89. Residues asparagine 96 and 119–121 (ISN) contribute to the NAD(+) site. Substrate-binding residues include asparagine 121 and arginine 152. Histidine 176 acts as the Proton acceptor in catalysis.

The protein belongs to the LDH/MDH superfamily. MDH type 3 family.

The enzyme catalyses (S)-malate + NAD(+) = oxaloacetate + NADH + H(+). In terms of biological role, catalyzes the reversible oxidation of malate to oxaloacetate. This Anaeromyxobacter dehalogenans (strain 2CP-C) protein is Malate dehydrogenase 2.